Here is a 322-residue protein sequence, read N- to C-terminus: Quinolinate synthase (322 aa).

2 residues coordinate iminosuccinate: histidine 38 and serine 55. Cysteine 100 serves as a coordination point for [4Fe-4S] cluster. Iminosuccinate contacts are provided by residues 126–128 and serine 143; that span reads YIN. Position 186 (cysteine 186) interacts with [4Fe-4S] cluster. Residues 212–214 and threonine 229 each bind iminosuccinate; that span reads HPE. Residue cysteine 279 coordinates [4Fe-4S] cluster.

Belongs to the quinolinate synthase family. Type 2 subfamily. [4Fe-4S] cluster is required as a cofactor.

It localises to the cytoplasm. The enzyme catalyses iminosuccinate + dihydroxyacetone phosphate = quinolinate + phosphate + 2 H2O + H(+). The protein operates within cofactor biosynthesis; NAD(+) biosynthesis; quinolinate from iminoaspartate: step 1/1. Functionally, catalyzes the condensation of iminoaspartate with dihydroxyacetone phosphate to form quinolinate. The chain is Quinolinate synthase from Aquifex aeolicus (strain VF5).